The chain runs to 130 residues: S-adenosylmethionine decarboxylase proenzyme (130 aa).

Ser-63 acts as the Schiff-base intermediate with substrate; via pyruvic acid in catalysis. Ser-63 is subject to Pyruvic acid (Ser); by autocatalysis. His-68 functions as the Proton acceptor; for processing activity in the catalytic mechanism. Cys-83 serves as the catalytic Proton donor; for catalytic activity.

It belongs to the prokaryotic AdoMetDC family. Type 1 subfamily. In terms of assembly, heterotetramer of two alpha and two beta chains arranged as a dimer of alpha/beta heterodimers. Pyruvate serves as cofactor. Is synthesized initially as an inactive proenzyme. Formation of the active enzyme involves a self-maturation process in which the active site pyruvoyl group is generated from an internal serine residue via an autocatalytic post-translational modification. Two non-identical subunits are generated from the proenzyme in this reaction, and the pyruvate is formed at the N-terminus of the alpha chain, which is derived from the carboxyl end of the proenzyme. The post-translation cleavage follows an unusual pathway, termed non-hydrolytic serinolysis, in which the side chain hydroxyl group of the serine supplies its oxygen atom to form the C-terminus of the beta chain, while the remainder of the serine residue undergoes an oxidative deamination to produce ammonia and the pyruvoyl group blocking the N-terminus of the alpha chain.

It catalyses the reaction S-adenosyl-L-methionine + H(+) = S-adenosyl 3-(methylsulfanyl)propylamine + CO2. The protein operates within amine and polyamine biosynthesis; S-adenosylmethioninamine biosynthesis; S-adenosylmethioninamine from S-adenosyl-L-methionine: step 1/1. Functionally, catalyzes the decarboxylation of S-adenosylmethionine to S-adenosylmethioninamine (dcAdoMet), the propylamine donor required for the synthesis of the polyamines spermine and spermidine from the diamine putrescine. The sequence is that of S-adenosylmethionine decarboxylase proenzyme from Thermosipho africanus (strain TCF52B).